Here is a 368-residue protein sequence, read N- to C-terminus: Agmatine deiminase (368 aa).

Cysteine 357 (amidino-cysteine intermediate) is an active-site residue.

The protein belongs to the agmatine deiminase family. Homodimer.

The catalysed reaction is agmatine + H2O = N-carbamoylputrescine + NH4(+). It participates in amine and polyamine biosynthesis; putrescine biosynthesis via agmatine pathway; N-carbamoylputrescine from agmatine: step 1/1. Its function is as follows. Mediates the hydrolysis of agmatine into N-carbamoylputrescine in the arginine decarboxylase (ADC) pathway of putrescine biosynthesis, a basic polyamine. This Pseudomonas syringae pv. syringae (strain B728a) protein is Agmatine deiminase.